The following is a 478-amino-acid chain: Vitronectin (478 aa).

Residues 1–19 form the signal peptide; it reads MAPLRPFFILALVAWVSLA. The SMB domain maps to 20-63; sequence DQESCKGRCTQGFMASKKCQCDELCTYYQSCCADYMEQCKPQVT. 7 disulfides stabilise this stretch: C24/C28, C24/C40, C28/C58, C38/C40, C38/C51, C44/C50, and C51/C58. A Cell attachment site motif is present at residues 64 to 66; sequence RGD. A Phosphothreonine modification is found at T69. A sulfotyrosine mark is found at Y75, Y78, and Y80. A disordered region spans residues 82 to 153; that stretch reads EEPKNNTNTG…QGTPEFPEEE (72 aa). N-linked (GlcNAc...) asparagine glycosylation occurs at N86. The span at 86-99 shows a compositional bias: polar residues; it reads NNTNTGVQPENTSP. Over residues 131–141 the composition is skewed to basic and acidic residues; sequence EQQEEILRPDT. 3 Hemopexin repeats span residues 157 to 201, 202 to 249, and 250 to 304; these read GKPF…VWGI, EGPI…FSGI, and PDNV…FEHF. N-linked (GlcNAc...) asparagine glycosylation is found at N168 and N241. Residues Y278 and Y281 each carry the sulfotyrosine modification. C292 and C431 are joined by a disulfide. 2 positions are modified to phosphoserine: S311 and S362. The tract at residues 359–395 is disordered; the sequence is LSHSAQAKKQKSKRRSRKRYRSRRGRGHRRSQSSNSR. Over residues 364–389 the composition is skewed to basic residues; it reads QAKKQKSKRRSRKRYRSRRGRGHRRS. Positions 366–399 are heparin-binding; the sequence is KKQKSKRRSRKRYRSRRGRGHRRSQSSNSRRSSR. S398 carries the post-translational modification Phosphoserine; by PKA. Y416, Y419, and Y421 each carry sulfotyrosine. The Hemopexin 4 repeat unit spans residues 420-473; sequence DYDMDWLVPATCEPIQSVYFFSGDKYYRVNLRTRRVDSVNPPYPRSIAQYWLGC.

In terms of assembly, interacts with SERPINE1/PAI1, insulin and C1QBP. In terms of processing, sulfated on tyrosine residues. Post-translationally, N- and O-glycosylated. It has been suggested that the active SMB domain may be permitted considerable disulfide bond heterogeneity or variability, thus two alternate disulfide patterns based on 3D structures are described with 1 disulfide bond conserved in both. As to expression, plasma.

It is found in the secreted. The protein localises to the extracellular space. Vitronectin is a cell adhesion and spreading factor found in serum and tissues. Vitronectin interact with glycosaminoglycans and proteoglycans. Is recognized by certain members of the integrin family and serves as a cell-to-substrate adhesion molecule. Inhibitor of the membrane-damaging effect of the terminal cytolytic complement pathway. This is Vitronectin (Vtn) from Mus musculus (Mouse).